Here is a 299-residue protein sequence, read N- to C-terminus: UDP-N-acetylenolpyruvoylglucosamine reductase (299 aa).

Residues 26–191 (GIGGPAKYFV…VSATFQLNAS (166 aa)) form the FAD-binding PCMH-type domain. Arg-170 is a catalytic residue. Cys-218 acts as the Proton donor in catalysis. Glu-288 is a catalytic residue.

Belongs to the MurB family. The cofactor is FAD.

Its subcellular location is the cytoplasm. It carries out the reaction UDP-N-acetyl-alpha-D-muramate + NADP(+) = UDP-N-acetyl-3-O-(1-carboxyvinyl)-alpha-D-glucosamine + NADPH + H(+). The protein operates within cell wall biogenesis; peptidoglycan biosynthesis. Functionally, cell wall formation. In Protochlamydia amoebophila (strain UWE25), this protein is UDP-N-acetylenolpyruvoylglucosamine reductase.